Reading from the N-terminus, the 281-residue chain is uncharacterized protein (281 aa).

Transmembrane regions (helical) follow at residues 30–50 (AIVASLLVSLACGLIGSFIVI), 54–74 (VFISGGVAHAAYGGIGLGYYF), 76–96 (FNPLWGAFVFSLVMALAMGWV), 106–126 (TLIGVMWALGMAIGIMLIDLT), 153–173 (AGLDMLIIILLFLLYKEFLAI), 198–218 (IALTVVMVMQLVGLIMVIALL), 235–255 (MMAVASGLGMVFCGVGLALSY), and 259–279 (LSSGATIILVASIAYLISLAF).

It belongs to the ABC-3 integral membrane protein family.

Its subcellular location is the cell membrane. This is an uncharacterized protein from Synechocystis sp. (strain ATCC 27184 / PCC 6803 / Kazusa).